Consider the following 215-residue polypeptide: Porin MspC (215 aa).

The signal sequence occupies residues 1–31; sequence MKAISRVLIAMISALAAAVAGLFVSAGTSHA.

This sequence belongs to the mycobacterial porin (TC 1.B.24) family. As to quaternary structure, octamers. Probably forms a goblet with the wide end on the exterior of the outer membrane and a central channel. It is not known if mixed oligomers of MspC with other Msp subunits form in vivo.

The protein resides in the cell outer membrane. Its subcellular location is the secreted. The protein localises to the cell wall. In terms of biological role, a constitutively expressed secondary porin, forms a water-filled channel which favors the permeation of cations and less efficiently phosphate. There are about 2400 porins in wild-type, 800 in an mspA deletion and 150 in a double mspA-mspC deletion. The protein is Porin MspC (mspC) of Mycolicibacterium smegmatis (strain ATCC 700084 / mc(2)155) (Mycobacterium smegmatis).